Here is a 118-residue protein sequence, read N- to C-terminus: Ribosome-binding factor A (118 aa).

Belongs to the RbfA family. In terms of assembly, monomer. Binds 30S ribosomal subunits, but not 50S ribosomal subunits or 70S ribosomes.

It localises to the cytoplasm. Functionally, one of several proteins that assist in the late maturation steps of the functional core of the 30S ribosomal subunit. Associates with free 30S ribosomal subunits (but not with 30S subunits that are part of 70S ribosomes or polysomes). Required for efficient processing of 16S rRNA. May interact with the 5'-terminal helix region of 16S rRNA. In Dehalococcoides mccartyi (strain ATCC BAA-2266 / KCTC 15142 / 195) (Dehalococcoides ethenogenes (strain 195)), this protein is Ribosome-binding factor A.